Reading from the N-terminus, the 167-residue chain is Gametocyte-specific factor 1 (167 aa).

A Phosphoserine modification is found at serine 8. 2 CHHC U11-48K-type zinc fingers span residues 14–41 (LLQCPYDKNHQIRACRFPYHLIKCRKNH) and 48–75 (LATCPFNARHQVPRAEISHHISSCDDKS). Positions 17, 23, 33, 37, 51, 57, 67, and 71 each coordinate Zn(2+).

The protein belongs to the UPF0224 (FAM112) family. As to expression, expressed abundantly in adult testis, at moderate levels in unfertilized eggs and ovaries and weakly in embryonic stem cells.

Its subcellular location is the cytoplasm. Its function is as follows. Required for spermatogenesis and is involved in the suppression of retrotransposon transcription in male germ cells. The polypeptide is Gametocyte-specific factor 1 (Mus musculus (Mouse)).